Here is a 120-residue protein sequence, read N- to C-terminus: Ribosome-binding factor A (120 aa).

This sequence belongs to the RbfA family. In terms of assembly, monomer. Binds 30S ribosomal subunits, but not 50S ribosomal subunits or 70S ribosomes.

The protein localises to the cytoplasm. One of several proteins that assist in the late maturation steps of the functional core of the 30S ribosomal subunit. Associates with free 30S ribosomal subunits (but not with 30S subunits that are part of 70S ribosomes or polysomes). Required for efficient processing of 16S rRNA. May interact with the 5'-terminal helix region of 16S rRNA. The protein is Ribosome-binding factor A of Chlorobaculum parvum (strain DSM 263 / NCIMB 8327) (Chlorobium vibrioforme subsp. thiosulfatophilum).